A 326-amino-acid polypeptide reads, in one-letter code: Beta-ketoacyl-[acyl-carrier-protein] synthase III (326 aa).

Catalysis depends on residues C112 and H251. An ACP-binding region spans residues 252–256; it reads QANSR. N281 is an active-site residue.

It belongs to the thiolase-like superfamily. FabH family. Homodimer.

The protein localises to the cytoplasm. It carries out the reaction malonyl-[ACP] + acetyl-CoA + H(+) = 3-oxobutanoyl-[ACP] + CO2 + CoA. It functions in the pathway lipid metabolism; fatty acid biosynthesis. Functionally, catalyzes the condensation reaction of fatty acid synthesis by the addition to an acyl acceptor of two carbons from malonyl-ACP. Catalyzes the first condensation reaction which initiates fatty acid synthesis and may therefore play a role in governing the total rate of fatty acid production. Possesses both acetoacetyl-ACP synthase and acetyl transacylase activities. Its substrate specificity determines the biosynthesis of branched-chain and/or straight-chain of fatty acids. This chain is Beta-ketoacyl-[acyl-carrier-protein] synthase III, found in Clostridium botulinum (strain ATCC 19397 / Type A).